The following is a 90-amino-acid chain: Bombyxin B-3 (90 aa).

The N-terminal stretch at 1–20 is a signal peptide; that stretch reads MMKTTIMFMLVVVISLTYSS. Intrachain disulfides connect C30/C76, C42/C89, and C75/C80. Residues 49-67 constitute a propeptide, c peptide like; that stretch reads SGAQYAPYFWTRQYLGSRG.

This sequence belongs to the insulin family. Heterodimer of a B chain and an A chain linked by two disulfide bonds.

The protein localises to the secreted. Functionally, brain peptide responsible for activation of prothoracic glands to produce ecdysone in insects. This chain is Bombyxin B-3 (BBXB3), found in Bombyx mori (Silk moth).